A 401-amino-acid chain; its full sequence is NADH-quinone oxidoreductase subunit D (401 aa).

Belongs to the complex I 49 kDa subunit family. In terms of assembly, NDH-1 is composed of 14 different subunits. Subunits NuoB, C, D, E, F, and G constitute the peripheral sector of the complex.

It is found in the cell inner membrane. The enzyme catalyses a quinone + NADH + 5 H(+)(in) = a quinol + NAD(+) + 4 H(+)(out). Functionally, NDH-1 shuttles electrons from NADH, via FMN and iron-sulfur (Fe-S) centers, to quinones in the respiratory chain. The immediate electron acceptor for the enzyme in this species is believed to be ubiquinone. Couples the redox reaction to proton translocation (for every two electrons transferred, four hydrogen ions are translocated across the cytoplasmic membrane), and thus conserves the redox energy in a proton gradient. The chain is NADH-quinone oxidoreductase subunit D from Rhodopseudomonas palustris (strain HaA2).